A 151-amino-acid polypeptide reads, in one-letter code: Deoxyuridine 5'-triphosphate nucleotidohydrolase (151 aa).

Substrate is bound by residues Arg-70–Gly-72, Asn-83, Leu-87–Asp-89, and Met-97.

This sequence belongs to the dUTPase family. Requires Mg(2+) as cofactor.

The catalysed reaction is dUTP + H2O = dUMP + diphosphate + H(+). It functions in the pathway pyrimidine metabolism; dUMP biosynthesis; dUMP from dCTP (dUTP route): step 2/2. In terms of biological role, this enzyme is involved in nucleotide metabolism: it produces dUMP, the immediate precursor of thymidine nucleotides and it decreases the intracellular concentration of dUTP so that uracil cannot be incorporated into DNA. In Pseudomonas syringae pv. syringae (strain B728a), this protein is Deoxyuridine 5'-triphosphate nucleotidohydrolase.